We begin with the raw amino-acid sequence, 105 residues long: Thioredoxin (105 aa).

The Thioredoxin domain occupies M1–I105. The cysteines at positions 29 and 32 are disulfide-linked.

Belongs to the thioredoxin family.

In terms of biological role, participates in various redox reactions through the reversible oxidation of its active center dithiol to a disulfide and catalyzes dithiol-disulfide exchange reactions. The sequence is that of Thioredoxin (trxA) from Acetoanaerobium sticklandii (strain ATCC 12662 / DSM 519 / JCM 1433 / CCUG 9281 / NCIMB 10654 / HF) (Clostridium sticklandii).